The sequence spans 215 residues: Octanoyltransferase (215 aa).

Residues threonine 31–glutamate 206 enclose the BPL/LPL catalytic domain. Substrate-binding positions include arginine 70 to histidine 77, serine 137 to glycine 139, and glycine 150 to alanine 152. Cysteine 168 acts as the Acyl-thioester intermediate in catalysis.

The protein belongs to the LipB family.

Its subcellular location is the cytoplasm. The enzyme catalyses octanoyl-[ACP] + L-lysyl-[protein] = N(6)-octanoyl-L-lysyl-[protein] + holo-[ACP] + H(+). The protein operates within protein modification; protein lipoylation via endogenous pathway; protein N(6)-(lipoyl)lysine from octanoyl-[acyl-carrier-protein]: step 1/2. Catalyzes the transfer of endogenously produced octanoic acid from octanoyl-acyl-carrier-protein onto the lipoyl domains of lipoate-dependent enzymes. Lipoyl-ACP can also act as a substrate although octanoyl-ACP is likely to be the physiological substrate. This is Octanoyltransferase from Pseudomonas fluorescens (strain Pf0-1).